The sequence spans 157 residues: Protein E6 (157 aa).

2 zinc fingers span residues 43-80 (CRFC…CSGC) and 117-153 (CQYC…CRHC).

The protein belongs to the papillomaviridae E6 protein family. As to quaternary structure, forms homodimers. Interacts with ubiquitin-protein ligase UBE3A/E6-AP; this interaction stimulates UBE3A ubiquitin activity. Interacts with host BAK1.

Its subcellular location is the host cytoplasm. It is found in the host nucleus. Functionally, plays a major role in the induction and maintenance of cellular transformation. E6 associates with host UBE3A/E6-AP ubiquitin-protein ligase and modulates its activity. Protects host keratinocytes from apoptosis by mediating the degradation of host BAK1. May also inhibit host immune response. In Human papillomavirus 23, this protein is Protein E6.